A 377-amino-acid polypeptide reads, in one-letter code: Phospho-N-acetylmuramoyl-pentapeptide-transferase (377 aa).

Helical transmembrane passes span tyrosine 9–glycine 29, threonine 59–alanine 79, phenylalanine 85–tyrosine 105, phenylalanine 122–alanine 142, tryptophan 155–phenylalanine 175, valine 178–threonine 198, glycine 210–valine 230, alanine 247–phenylalanine 267, valine 274–isoleucine 294, isoleucine 299–valine 319, and glutamine 354–leucine 374.

Belongs to the glycosyltransferase 4 family. MraY subfamily. Mg(2+) is required as a cofactor.

The protein localises to the cell inner membrane. It catalyses the reaction UDP-N-acetyl-alpha-D-muramoyl-L-alanyl-gamma-D-glutamyl-meso-2,6-diaminopimeloyl-D-alanyl-D-alanine + di-trans,octa-cis-undecaprenyl phosphate = di-trans,octa-cis-undecaprenyl diphospho-N-acetyl-alpha-D-muramoyl-L-alanyl-D-glutamyl-meso-2,6-diaminopimeloyl-D-alanyl-D-alanine + UMP. Its pathway is cell wall biogenesis; peptidoglycan biosynthesis. Catalyzes the initial step of the lipid cycle reactions in the biosynthesis of the cell wall peptidoglycan: transfers peptidoglycan precursor phospho-MurNAc-pentapeptide from UDP-MurNAc-pentapeptide onto the lipid carrier undecaprenyl phosphate, yielding undecaprenyl-pyrophosphoryl-MurNAc-pentapeptide, known as lipid I. The chain is Phospho-N-acetylmuramoyl-pentapeptide-transferase from Bordetella bronchiseptica (strain ATCC BAA-588 / NCTC 13252 / RB50) (Alcaligenes bronchisepticus).